Here is a 294-residue protein sequence, read N- to C-terminus: Indole-3-glycerol phosphate synthase (294 aa).

It belongs to the TrpC family.

The catalysed reaction is 1-(2-carboxyphenylamino)-1-deoxy-D-ribulose 5-phosphate + H(+) = (1S,2R)-1-C-(indol-3-yl)glycerol 3-phosphate + CO2 + H2O. It functions in the pathway amino-acid biosynthesis; L-tryptophan biosynthesis; L-tryptophan from chorismate: step 4/5. The protein is Indole-3-glycerol phosphate synthase of Synechococcus sp. (strain CC9902).